The following is a 310-amino-acid chain: Glutaminase (310 aa).

7 residues coordinate substrate: Ser-66, Asn-117, Glu-161, Asn-168, Tyr-192, Tyr-244, and Val-262.

This sequence belongs to the glutaminase family. Homotetramer.

The enzyme catalyses L-glutamine + H2O = L-glutamate + NH4(+). The polypeptide is Glutaminase (Shigella boydii serotype 4 (strain Sb227)).